Reading from the N-terminus, the 412-residue chain is Serine hydroxymethyltransferase (412 aa).

(6S)-5,6,7,8-tetrahydrofolate-binding positions include leucine 117 and 121–123 (GHL). Lysine 226 bears the N6-(pyridoxal phosphate)lysine mark. Residue 349-351 (SPF) participates in (6S)-5,6,7,8-tetrahydrofolate binding.

It belongs to the SHMT family. As to quaternary structure, homodimer. Pyridoxal 5'-phosphate serves as cofactor.

The protein resides in the cytoplasm. The catalysed reaction is (6R)-5,10-methylene-5,6,7,8-tetrahydrofolate + glycine + H2O = (6S)-5,6,7,8-tetrahydrofolate + L-serine. Its pathway is one-carbon metabolism; tetrahydrofolate interconversion. It functions in the pathway amino-acid biosynthesis; glycine biosynthesis; glycine from L-serine: step 1/1. Catalyzes the reversible interconversion of serine and glycine with tetrahydrofolate (THF) serving as the one-carbon carrier. This reaction serves as the major source of one-carbon groups required for the biosynthesis of purines, thymidylate, methionine, and other important biomolecules. Also exhibits THF-independent aldolase activity toward beta-hydroxyamino acids, producing glycine and aldehydes, via a retro-aldol mechanism. The polypeptide is Serine hydroxymethyltransferase (Nitratidesulfovibrio vulgaris (strain DSM 19637 / Miyazaki F) (Desulfovibrio vulgaris)).